The chain runs to 981 residues: Ubiquitin carboxyl-terminal hydrolase 15 (981 aa).

A2 carries the N-acetylalanine modification. The segment at 2 to 223 is mediates interaction with SART3; sequence AEGGAADLDT…KNEDGTWPRG (222 aa). One can recognise a DUSP domain in the interval 7–118; that stretch reads ADLDTQRSDI…GQEPIARKVV (112 aa). The interval 216 to 237 is disordered; that stretch reads EDGTWPRGPSTPKSPGASNFST. At T226 the chain carries Phosphothreonine. Over residues 226–237 the composition is skewed to polar residues; it reads TPKSPGASNFST. Phosphoserine occurs at positions 229 and 242. One can recognise a USP domain in the interval 289–933; it reads CGLSNLGNTC…AAYVLFYQRQ (645 aa). The active-site Nucleophile is the C298. T602 carries the post-translational modification Phosphothreonine. The segment at 633–694 is disordered; that stretch reads CCEDQNINGN…GGDNDSENGL (62 aa). Acidic residues predominate over residues 656-673; that stretch reads METDEPDDESSQDQELPS. The active-site Proton acceptor is the H891. The interval 952–981 is disordered; that stretch reads SAATGIPLESDEDSNDNDNDLENENCMHTN. Acidic residues predominate over residues 960–974; the sequence is ESDEDSNDNDNDLEN. Residues S961 and S965 each carry the phosphoserine modification.

The protein belongs to the peptidase C19 family. A homodimer structure has been reported; however it is unclear whether the protein form a homodimer in vivo. Identified in a complex with the COP9 signalosome complex (CSN). Interacts with SMAD1, SMAD2 and SMAD3; the interaction is direct. Forms a complex with SMURF2 and SMAD7. Interacts with TGFBR1. Interacts with SART3; the interaction is direct. May interact with RNF20 and RNF40. May interact with PRKN. Interacts with INCA1. In terms of processing, phosphorylated. Phosphorylation protects against ubiquitination and subsequent degradation by the proteasome. Ubiquitinated, leading to degradation by the proteasome. In terms of tissue distribution, widely expressed with highest levels in the brain and spleen, and lowest levels in the muscles (at protein level). In the midbrain, strong expression in neurons including the dopaminergic neurons (at protein level). Widely expressed with highest levels in testis, heart and liver.

It is found in the cytoplasm. The protein resides in the nucleus. The protein localises to the mitochondrion. The catalysed reaction is Thiol-dependent hydrolysis of ester, thioester, amide, peptide and isopeptide bonds formed by the C-terminal Gly of ubiquitin (a 76-residue protein attached to proteins as an intracellular targeting signal).. Hydrolase that removes conjugated ubiquitin from target proteins and regulates various pathways such as the TGF-beta receptor signaling, NF-kappa-B and RNF41/NRDP1-PRKN pathways. Acts as a key regulator of TGF-beta receptor signaling pathway, but the precise mechanism is still unclear: according to a report, acts by promoting deubiquitination of monoubiquitinated R-SMADs (SMAD1, SMAD2 and/or SMAD3), thereby alleviating inhibition of R-SMADs and promoting activation of TGF-beta target genes. According to another reports, regulates the TGF-beta receptor signaling pathway by mediating deubiquitination and stabilization of TGFBR1, leading to an enhanced TGF-beta signal. Able to mediate deubiquitination of monoubiquitinated substrates, 'Lys-27'-, 'Lys-48'- and 'Lys-63'-linked polyubiquitin chains. May also regulate gene expression and/or DNA repair through the deubiquitination of histone H2B. Acts as an inhibitor of mitophagy by counteracting the action of parkin (PRKN): hydrolyzes cleavage of 'Lys-48'- and 'Lys-63'-linked polyubiquitin chains attached by parkin on target proteins such as MFN2, thereby reducing parkin's ability to drive mitophagy. Acts as an associated component of COP9 signalosome complex (CSN) and regulates different pathways via this association: regulates NF-kappa-B by mediating deubiquitination of NFKBIA and deubiquitinates substrates bound to VCP. Involved in endosome organization by mediating deubiquitination of SQSTM1: ubiquitinated SQSTM1 forms a molecular bridge that restrains cognate vesicles in the perinuclear region and its deubiquitination releases target vesicles for fast transport into the cell periphery. Acts as a negative regulator of antifungal immunity by mediating 'Lys-27'-linked deubiquitination of CARD9, thereby inactivating CARD9. This is Ubiquitin carboxyl-terminal hydrolase 15 (Usp15) from Mus musculus (Mouse).